A 389-amino-acid polypeptide reads, in one-letter code: Gastricsin (389 aa).

The signal sequence occupies residues 1-16 (MKWMVVALVCLQLLEA). Residues 17–59 (KVTKVTLKKFKSIRENLREQGLLEDFLKTNHYDPAQKYHFGDF) constitute a propeptide, activation peptide. Residues 73-386 (YFGEISIGTP…DMGNNRVGFA (314 aa)) form the Peptidase A1 domain. The active site involves D91. Intrachain disulfides connect C104-C109 and C268-C272. D277 is an active-site residue. C311 and C344 are disulfide-bonded.

This sequence belongs to the peptidase A1 family.

Its subcellular location is the secreted. It catalyses the reaction More restricted specificity than pepsin A, but shows preferential cleavage at Tyr-|-Xaa bonds. High activity on hemoglobin.. In terms of biological role, hydrolyzes a variety of proteins. In Suncus murinus (Asian house shrew), this protein is Gastricsin (PGC).